The following is an 87-amino-acid chain: DNA-directed RNA polymerase subunit omega (87 aa).

The protein belongs to the RNA polymerase subunit omega family. The RNAP catalytic core consists of 2 alpha, 1 beta, 1 beta' and 1 omega subunit. When a sigma factor is associated with the core the holoenzyme is formed, which can initiate transcription.

The catalysed reaction is RNA(n) + a ribonucleoside 5'-triphosphate = RNA(n+1) + diphosphate. Functionally, promotes RNA polymerase assembly. Latches the N- and C-terminal regions of the beta' subunit thereby facilitating its interaction with the beta and alpha subunits. The protein is DNA-directed RNA polymerase subunit omega of Alcanivorax borkumensis (strain ATCC 700651 / DSM 11573 / NCIMB 13689 / SK2).